The chain runs to 275 residues: Aliphatic sulfonates import ATP-binding protein SsuB 1 (275 aa).

An ABC transporter domain is found at 34-260 (ISLTGLEKSF…RHGHPGLCEL (227 aa)). 66-73 (GKSGCGKS) provides a ligand contact to ATP.

Belongs to the ABC transporter superfamily. Aliphatic sulfonates importer (TC 3.A.1.17.2) family. The complex is composed of two ATP-binding proteins (SsuB), two transmembrane proteins (SsuC) and a solute-binding protein (SsuA).

Its subcellular location is the cell inner membrane. It catalyses the reaction ATP + H2O + aliphatic sulfonate-[sulfonate-binding protein]Side 1 = ADP + phosphate + aliphatic sulfonateSide 2 + [sulfonate-binding protein]Side 1.. In terms of biological role, part of the ABC transporter complex SsuABC involved in aliphatic sulfonates import. Responsible for energy coupling to the transport system. In Rhizobium johnstonii (strain DSM 114642 / LMG 32736 / 3841) (Rhizobium leguminosarum bv. viciae), this protein is Aliphatic sulfonates import ATP-binding protein SsuB 1.